The sequence spans 49 residues: Large ribosomal subunit protein bL33 (49 aa).

Belongs to the bacterial ribosomal protein bL33 family.

The chain is Large ribosomal subunit protein bL33 from Clostridium botulinum (strain Alaska E43 / Type E3).